Reading from the N-terminus, the 363-residue chain is UDP-N-acetylglucosamine--N-acetylmuramyl-(pentapeptide) pyrophosphoryl-undecaprenol N-acetylglucosamine transferase (363 aa).

Residues 10-12 (TGG), asparagine 124, serine 195, isoleucine 250, and glutamine 295 each bind UDP-N-acetyl-alpha-D-glucosamine.

Belongs to the glycosyltransferase 28 family. MurG subfamily.

It localises to the cell membrane. It catalyses the reaction di-trans,octa-cis-undecaprenyl diphospho-N-acetyl-alpha-D-muramoyl-L-alanyl-D-glutamyl-meso-2,6-diaminopimeloyl-D-alanyl-D-alanine + UDP-N-acetyl-alpha-D-glucosamine = di-trans,octa-cis-undecaprenyl diphospho-[N-acetyl-alpha-D-glucosaminyl-(1-&gt;4)]-N-acetyl-alpha-D-muramoyl-L-alanyl-D-glutamyl-meso-2,6-diaminopimeloyl-D-alanyl-D-alanine + UDP + H(+). It participates in cell wall biogenesis; peptidoglycan biosynthesis. Cell wall formation. Catalyzes the transfer of a GlcNAc subunit on undecaprenyl-pyrophosphoryl-MurNAc-pentapeptide (lipid intermediate I) to form undecaprenyl-pyrophosphoryl-MurNAc-(pentapeptide)GlcNAc (lipid intermediate II). The polypeptide is UDP-N-acetylglucosamine--N-acetylmuramyl-(pentapeptide) pyrophosphoryl-undecaprenol N-acetylglucosamine transferase (Halalkalibacterium halodurans (strain ATCC BAA-125 / DSM 18197 / FERM 7344 / JCM 9153 / C-125) (Bacillus halodurans)).